We begin with the raw amino-acid sequence, 383 residues long: MPNRRDFLKTAAFATLGSGIAVSQVLAGECMPSAIHINKYGIGGKMKMTFFPYELKLRHVFTVATYSRTTTPDVQVEIEYEGVTGYGEASMPPYLGETVESVMNFLKKVNLEQFSDPFQLEDILSYVDSLSPKDTAAKAAVDIALHDLVGKLLGAPWYKIWGLNKEKTPSTTFTIGIDTPDVVRAKTKECAGLFNILKVKLGRDNDKEMIETIRSVTDLPIAVDANQGWKDRQYALDMIHWLKEKGIVMIEQPMPKEQLDDIAWVTQQSPLPVFADESLQRLGDVAALKGAFTGINIKLMKCTGMREAWKMVTLAHALGMRVMVGCMTETSCAISAASQFSPAVDFADLDGNLLISNDRFKGVEVVNGKITLNDLPGIGVMKI.

Residues Arg68, Tyr94, and 198-200 each bind substrate; that span reads KVK. Residues Asp224, Glu251, and Asp276 each coordinate Mg(2+). Substrate-binding positions include Lys298, 326–328, and 348–350; these read CMT and DLD.

The protein belongs to the mandelate racemase/muconate lactonizing enzyme family. The cofactor is Mg(2+).

The catalysed reaction is L-alanyl-L-glutamate = L-alanyl-D-glutamate. Functionally, catalyzes the epimerization of L-Ala-D-Glu to L-Ala-L-Glu and may play a role in the metabolism of the murein peptide, of which L-Ala-D-Glu is a component. Is also able to catalyze the epimerization of L-Ala-D-Asp, L-Ala-L-Glu, L-Ala-L-Ser, L-Ala-L-Pro, L-Ala-L-L-Val, L-Ala-L-Thr, L-Ala-L-Leu, L-Ala-L-Ile and L-Gly-L-Glu (in vitro). The protein is L-Ala-D/L-Glu epimerase of Bacteroides thetaiotaomicron (strain ATCC 29148 / DSM 2079 / JCM 5827 / CCUG 10774 / NCTC 10582 / VPI-5482 / E50).